The following is a 187-amino-acid chain: MGRYSRDPENPAKSCKARGSNLRVHFKNTYETAMAIRKMPLRRAVRYLKNVTEKKECIPFRRFNGGVGRCAQAKQFGTTQGRWPKKSAEFPLQLLRNAESNADYKGLDVDRLVIDHIQVNRAPCLRRRTYRAHGRINPYMSSPCHIEVALSEREDAVSRAAPTDDAPAKKKLSKKKLARQKEKMMRE.

Residues 155-187 are disordered; sequence DAVSRAAPTDDAPAKKKLSKKKLARQKEKMMRE. Residues 169 to 178 are compositionally biased toward basic residues; sequence KKKLSKKKLA.

It belongs to the universal ribosomal protein uL22 family.

The polypeptide is Large ribosomal subunit protein uL22 (RpL17) (Lonomia obliqua (Moth)).